The chain runs to 225 residues: uncharacterized protein (225 aa).

The signal sequence occupies residues M1–A22. A 4Fe-4S ferredoxin-type domain is found at G161–Y190.

This is an uncharacterized protein from Escherichia coli (strain K12).